The primary structure comprises 770 residues: Cullin-1 (770 aa).

A Cullin neddylation domain is found at 700–761 (DRKLQIQAAI…EKEYLMRVEG (62 aa)). A Glycyl lysine isopeptide (Lys-Gly) (interchain with G-Cter in NEDD8) cross-link involves residue Lys-714.

The protein belongs to the cullin family. Part of a complex that includes culA, fbxA and regA. Formation of this complex is dependent on the MAP kinase erkB. In terms of processing, neddylated; which enhances the ubiquitination activity of SCF.

The protein operates within protein modification; protein ubiquitination. Its function is as follows. Probable core component of cullin-based SCF-like E3 ubiquitin-protein ligase complexes which mediate the ubiquitination and subsequent proteasomal degradation of target proteins. The E3 ubiquitin-protein ligase activity of the complex is dependent on the neddylation of the cullin subunit. Required at several stages during development. CulA and fbxA regulate multicellular development by targeting regA for degradation via a pathway that requires erkB function, leading to an increase in cAMP and PKA activity. This chain is Cullin-1 (culA), found in Dictyostelium discoideum (Social amoeba).